A 295-amino-acid chain; its full sequence is ATP synthase gamma chain (295 aa).

The protein belongs to the ATPase gamma chain family. As to quaternary structure, F-type ATPases have 2 components, CF(1) - the catalytic core - and CF(0) - the membrane proton channel. CF(1) has five subunits: alpha(3), beta(3), gamma(1), delta(1), epsilon(1). CF(0) has three main subunits: a, b and c.

It localises to the cell membrane. Its function is as follows. Produces ATP from ADP in the presence of a proton gradient across the membrane. The gamma chain is believed to be important in regulating ATPase activity and the flow of protons through the CF(0) complex. In Herpetosiphon aurantiacus (strain ATCC 23779 / DSM 785 / 114-95), this protein is ATP synthase gamma chain.